We begin with the raw amino-acid sequence, 264 residues long: Molybdenum transport system permease protein ModB (264 aa).

Helical transmembrane passes span 11–31 (VYLPAIAGIVFVAMPLVAIAI), 57–77 (TAAASTVLCVLLGVPMALVLA), 90–110 (LILLPLVLPPVVGGIALLYAF), 127–147 (IAFSTAAVVLAQTFVSLPYLV), 176–196 (WWRVTLPLLLPGVVSGSVLAF), and 234–254 (AAVALSLLLVVVAALVVLGVG). An ABC transmembrane type-1 domain is found at 51–253 (LLLSVKTAAA…VVAALVVLGV (203 aa)).

This sequence belongs to the binding-protein-dependent transport system permease family. CysTW subfamily.

The protein resides in the cell membrane. Functionally, part of the binding-protein-dependent transport system ModABCD for molybdenum; probably responsible for the translocation of the substrate across the membrane. This chain is Molybdenum transport system permease protein ModB (modB), found in Mycobacterium bovis (strain ATCC BAA-935 / AF2122/97).